We begin with the raw amino-acid sequence, 405 residues long: uncharacterized protein (405 aa).

The first 34 residues, 1–34, serve as a signal peptide directing secretion; it reads MNKFLKYFLILLALVLIVVPIVFATLLFKTSQDA. Basic and acidic residues predominate over residues 348 to 359; it reads EQNDTTDKDKTS. Residues 348-405 form a disordered region; the sequence is EQNDTTDKDKTSNENSDSTNNSDSSNQQQPATDQNSNQNQGGTQQAPQASNNQNGVVN. Low complexity-rich tracts occupy residues 360–373 and 381–392; these read NENS…DSSN and QNSNQNQGGTQQ. Positions 393 to 405 are enriched in polar residues; sequence APQASNNQNGVVN.

The protein belongs to the LytR/CpsA/Psr (LCP) family.

This is an uncharacterized protein from Staphylococcus aureus (strain NCTC 8325 / PS 47).